The primary structure comprises 554 residues: Zinc finger protein syd-9 (554 aa).

C2H2-type zinc fingers lie at residues 20-43 (LTCPQCPKSFSSTKLLQQHQQMFH), 65-87 (FICETCGKAFRFRSNLAEHRSVH), and 93-116 (YVCKFCGKSSRLKGNLTKHILKHH). Disordered stretches follow at residues 136–158 (KIVTKDNGPTTNGSTPTTSTATP), 298–319 (SPDTVQSDHSDDFEQDSPPPMA), and 342–383 (ASGQ…CPSP). Over residues 142-158 (NGPTTNGSTPTTSTATP) the composition is skewed to low complexity. 2 stretches are compositionally biased toward polar residues: residues 351–360 (PDSTDTQKGC) and 370–379 (SDPSTSSGDS). The C2H2-type 4 zinc finger occupies 387–410 (LHCKECGTLVRKSSHLPIHMTMSH). A disordered region spans residues 516–554 (RMEMSLSPIKPFQQRFSRERSSSSSVERSPSRERSRSPL). The span at 544–554 (SPSRERSRSPL) shows a compositional bias: basic and acidic residues.

In terms of tissue distribution, expressed mainly in body wall muscles and ventral cord motoneurons.

The protein localises to the nucleus. Its subcellular location is the nucleus speckle. In terms of biological role, plays a role in regulating synaptic function, probably by modulation of endocytosis. May be dispensable in muscle for normal locomotion. May be involved in post-transcriptional mRNA processing, in parallel with unc-75. In Caenorhabditis elegans, this protein is Zinc finger protein syd-9.